Here is a 265-residue protein sequence, read N- to C-terminus: 4-hydroxy-tetrahydrodipicolinate reductase (265 aa).

NAD(+) contacts are provided by residues 7–12, Asp-33, 96–98, and 120–123; these read GASGRM, GTT, and AANF. His-153 serves as the catalytic Proton donor/acceptor. A (S)-2,3,4,5-tetrahydrodipicolinate-binding site is contributed by His-154. The active-site Proton donor is Lys-157. 163–164 provides a ligand contact to (S)-2,3,4,5-tetrahydrodipicolinate; sequence GT.

The protein belongs to the DapB family.

Its subcellular location is the cytoplasm. It carries out the reaction (S)-2,3,4,5-tetrahydrodipicolinate + NAD(+) + H2O = (2S,4S)-4-hydroxy-2,3,4,5-tetrahydrodipicolinate + NADH + H(+). The enzyme catalyses (S)-2,3,4,5-tetrahydrodipicolinate + NADP(+) + H2O = (2S,4S)-4-hydroxy-2,3,4,5-tetrahydrodipicolinate + NADPH + H(+). The protein operates within amino-acid biosynthesis; L-lysine biosynthesis via DAP pathway; (S)-tetrahydrodipicolinate from L-aspartate: step 4/4. Catalyzes the conversion of 4-hydroxy-tetrahydrodipicolinate (HTPA) to tetrahydrodipicolinate. This is 4-hydroxy-tetrahydrodipicolinate reductase from Cupriavidus necator (strain ATCC 17699 / DSM 428 / KCTC 22496 / NCIMB 10442 / H16 / Stanier 337) (Ralstonia eutropha).